Consider the following 342-residue polypeptide: GTPase Obg (342 aa).

Residues 1–159 (MQFIDQAKIE…KQLRLELKLL (159 aa)) enclose the Obg domain. Positions 160–330 (AEVGIIGLPN…MLQEIWGILD (171 aa)) constitute an OBG-type G domain. GTP-binding positions include 166 to 173 (GLPNAGKS), 191 to 195 (FTTLI), 213 to 216 (DIPG), 280 to 283 (NKID), and 311 to 313 (SAV). Residues serine 173 and threonine 193 each contribute to the Mg(2+) site.

It belongs to the TRAFAC class OBG-HflX-like GTPase superfamily. OBG GTPase family. In terms of assembly, monomer. Mg(2+) serves as cofactor.

The protein resides in the cytoplasm. In terms of biological role, an essential GTPase which binds GTP, GDP and possibly (p)ppGpp with moderate affinity, with high nucleotide exchange rates and a fairly low GTP hydrolysis rate. Plays a role in control of the cell cycle, stress response, ribosome biogenesis and in those bacteria that undergo differentiation, in morphogenesis control. The sequence is that of GTPase Obg from Nostoc punctiforme (strain ATCC 29133 / PCC 73102).